Reading from the N-terminus, the 222-residue chain is UPF0758 protein TM_1557 (222 aa).

Residues 101-222 enclose the MPN domain; that stretch reads KLDSSVKVYK…YFSFREEGEL (122 aa). Positions 171, 173, and 184 each coordinate Zn(2+). Positions 171–184 match the JAMM motif motif; sequence HNHPSGDPTPSKED.

This sequence belongs to the UPF0758 family.

The sequence is that of UPF0758 protein TM_1557 from Thermotoga maritima (strain ATCC 43589 / DSM 3109 / JCM 10099 / NBRC 100826 / MSB8).